A 731-amino-acid polypeptide reads, in one-letter code: SUN domain-containing protein 2 (731 aa).

Disordered regions lie at residues 1–69 (MSRR…SHTS) and 106–142 (SGDLRGRRRRGTGGSESSKANGLTAESKASEDFFGSS). The tract at residues 1–128 (MSRRSQRLTR…GSESSKANGL (128 aa)) is LMNA-binding. Topologically, residues 1–226 (MSRRSQRLTR…SRHFSLNLKS (226 aa)) are nuclear. Ser-12 carries the post-translational modification Phosphoserine. Low complexity predominate over residues 18–33 (GGSSSSGASSVAGSQG). Ser-39 and Ser-55 each carry phosphoserine. Position 117 is a phosphothreonine (Thr-117). Phosphoserine occurs at positions 120, 123, and 147. Residues 227–247 (FLWFLLLLLLLTGLTYGAWHF) form a helical membrane-spanning segment. The Perinuclear space portion of the chain corresponds to 248-731 (YPLGLQTLQP…RFRVHGEPAH (484 aa)). Coiled-coil stretches lie at residues 396–452 (QESE…VADE) and 486–519 (RSGLLQRDEMHAQLQELENKILTKMAEMQGKSAR). A sufficient for interaction with SYNE1 and SYNE2 region spans residues 521-731 (AAASLGQILQ…RFRVHGEPAH (211 aa)). One can recognise an SUN domain in the interval 569 to 730 (GASVISTRCS…YRFRVHGEPA (162 aa)). N-linked (GlcNAc...) asparagine glycosylation is present at Asn-650.

In terms of assembly, core component of the LINC complex which is composed of inner nuclear membrane SUN domain-containing proteins coupled to outer nuclear membrane KASH domain-containing nesprins. SUN and KASH domain-containing proteins seem to bind each other promiscuously; however, differentially expression of LINC complex constituents is giving rise to specific assemblies. At least SUN1/2-containing core LINC complexes are proposed to be hexameric composed of three protomers of each KASH and SUN domain-containing protein. Interacts with SYNE2; the SUN2:SYNE2/KASH2 LINC complex is a heterohexamer; the homotrimeric cloverleave-like conformation of the SUN domain is a prerequisite for LINC complex formation in which three separate SYNE2/KASH2 peptides bind at the interface of adjacent SUN domains. Component of a probable SUN2:KASH5 LINC complex. Interacts with SYNE1 and SYNE3; probably forming respective LINC complexes. Interacts with A-type lamin. Interaction with lamins B1 and C is hardly detectable. Interacts with EMD. Interacts with RAB5A. Interacts with TMEM43 and TMEM201. Interacts with IRAG2. Post-translationally, the disulfide bond with SYNE2 is required for stability of the SUN2:SYNE2/KASH2 LINC complex under tensile forces though not required for the interaction. The disulfide bond is proposed to be conserved in LINC complexes involved in force transmission. In terms of tissue distribution, highly expressed in heart, placenta and muscle.

The protein localises to the nucleus inner membrane. The protein resides in the nucleus envelope. Its subcellular location is the endosome membrane. As a component of the LINC (LInker of Nucleoskeleton and Cytoskeleton) complex, involved in the connection between the nuclear lamina and the cytoskeleton. The nucleocytoplasmic interactions established by the LINC complex play an important role in the transmission of mechanical forces across the nuclear envelope and in nuclear movement and positioning. Specifically, SYNE2 and SUN2 assemble in arrays of transmembrane actin-associated nuclear (TAN) lines which are bound to F-actin cables and couple the nucleus to retrograde actin flow during actin-dependent nuclear movement. Required for interkinetic nuclear migration (INM) and essential for nucleokinesis and centrosome-nucleus coupling during radial neuronal migration in the cerebral cortex and during glial migration. Required for nuclear migration in retinal photoreceptor progenitors implicating association with cytoplasmic dynein-dynactin and kinesin motor complexes, and probably B-type lamins; SUN1 and SUN2 seem to act redundantly. The SUN1/2:KASH5 LINC complex couples telomeres to microtubules during meiosis; SUN1 and SUN2 seem to act at least partial redundantly. Anchors chromosome movement in the prophase of meiosis and is involved in selective gene expression of coding and non-coding RNAs needed for gametogenesis. Required for telomere attachment to nuclear envelope and gametogenesis. May also function on endocytic vesicles as a receptor for Rab5-GDP and participate in the activation of Rab5. The chain is SUN domain-containing protein 2 from Mus musculus (Mouse).